The following is a 638-amino-acid chain: Ubiquitin-associated and SH3 domain-containing protein B (638 aa).

Serine 9 carries the post-translational modification Phosphoserine. Threonine 12 bears the Phosphothreonine mark. The region spanning 23–65 (TVKHGSALDVLLSMGFPRARAQKALASTGGRSVQAACDWLFSH) is the UBA domain. Residues 243-308 (ANHETLQVIY…PENYITKADE (66 aa)) form the SH3 domain. The protein tyrosine phosphatase stretch occupies residues 369 to 638 (GPQKRCLFVC…FNWRETLLQE (270 aa)). The active site involves arginine 379. Catalysis depends on histidine 380, which acts as the Tele-phosphohistidine intermediate. Residue histidine 565 is part of the active site.

Homodimer. Interacts with JAK2 (in vitro). Interacts with CBL. Part of a complex containing CBL and activated EGFR. Interacts with ubiquitin and with mono-ubiquitinated proteins. Interacts with ZAP70 (ubiquitinated form). In terms of tissue distribution, detected in splenic T-cells and B-cells, total spleen, skeletal muscle, heart, lung, kidney, thymus, brain and liver (at protein level). Highly expressed in brain. Detected in heart, spleen, lung, liver, kidney and testis.

Its subcellular location is the cytoplasm. It is found in the nucleus. The enzyme catalyses O-phospho-L-tyrosyl-[protein] + H2O = L-tyrosyl-[protein] + phosphate. In terms of biological role, interferes with CBL-mediated down-regulation and degradation of receptor-type tyrosine kinases. Promotes accumulation of activated target receptors, such as T-cell receptors and EGFR, on the cell surface. Exhibits tyrosine phosphatase activity toward several substrates including EGFR, FAK, SYK, and ZAP70. Down-regulates proteins that are dually modified by both protein tyrosine phosphorylation and ubiquitination. The sequence is that of Ubiquitin-associated and SH3 domain-containing protein B (Ubash3b) from Mus musculus (Mouse).